We begin with the raw amino-acid sequence, 257 residues long: Probable septum site-determining protein MinC (257 aa).

The protein belongs to the MinC family. In terms of assembly, interacts with MinD and FtsZ.

In terms of biological role, cell division inhibitor that blocks the formation of polar Z ring septums. Rapidly oscillates between the poles of the cell to destabilize FtsZ filaments that have formed before they mature into polar Z rings. Prevents FtsZ polymerization. The sequence is that of Probable septum site-determining protein MinC from Burkholderia lata (strain ATCC 17760 / DSM 23089 / LMG 22485 / NCIMB 9086 / R18194 / 383).